A 589-amino-acid chain; its full sequence is Deoxynucleoside triphosphate triphosphohydrolase SAMHD1 (589 aa).

Met-1 carries the N-acetylmethionine modification. Positions 1–10 (MQSADSQNTP) are enriched in polar residues. Residues 1-41 (MQSADSQNTPKRPRRDGSPRTPPDSPLADAETSPSHDLDPD) are disordered. A Phosphoserine modification is found at Ser-18. A Phosphothreonine modification is found at Thr-21. Ser-33 and Ser-88 each carry phosphoserine. The SAM domain occupies 45-100 (WGPEQVWSFLRRCGFSDSELLKRCREKRMSGSLLPFPEDLGISSHGKKMKLLNCIQ). Lys-104 and Val-105 together coordinate GTP. Asn-107 serves as a coordination point for dGTP. Residues Asp-125, Gln-130, and Arg-133 each coordinate GTP. DGTP is bound by residues Gln-137, Leu-138, Val-144, and Arg-152. Residue Gln-137 coordinates dATP. DCTP is bound at residue Gln-137. Gln-137 contributes to the dTTP binding site. Arg-152 is a binding site for dATP. Arg-152 is a binding site for dCTP. Arg-152 contributes to the dTTP binding site. Residues 152-277 (RFEHSLGVGY…IKDASKWLYK (126 aa)) enclose the HD domain. His-155, His-194, and Asp-195 together coordinate Mn(2+). Residues His-198 and His-203 each contribute to the dATP site. DCTP-binding residues include His-198 and His-203. DTTP-binding residues include His-198 and His-203. Residue His-221 is part of the active site. Asp-300 serves as a coordination point for Mn(2+). DGTP contacts are provided by Lys-301, Tyr-304, Asp-308, Arg-322, Arg-341, Lys-343, Asn-347, Arg-355, Tyr-363, Gln-364, His-365, and Lys-366. Positions 301, 304, and 308 each coordinate dATP. Lys-301, Tyr-304, and Asp-308 together coordinate dCTP. Lys-301, Tyr-304, and Asp-308 together coordinate dTTP. Arg-355 contacts dATP. Arg-355 serves as a coordination point for dCTP. Position 364 (Gln-364) interacts with dATP. Position 364 (Gln-364) interacts with dCTP. Residue Gln-364 coordinates dTTP. GTP-binding residues include Arg-440 and Lys-444. Residue Lys-457 forms a Glycyl lysine isopeptide (Lys-Gly) (interchain with G-Cter in SUMO2) linkage. A GTP-binding site is contributed by Lys-512. Lys-512 contacts dGTP.

Belongs to the SAMHD1 family. As to quaternary structure, homodimer; in absence of GTP and dNTP. Homotetramer; in GTP- and dNTP-bound form. Interacts with MRE11; leading to stimulate the exonuclease activity of MRE11. Interacts with RBBP8/CtIP. Interacts (via its C-terminus) with CD81. Zn(2+) serves as cofactor.

The protein resides in the nucleus. It localises to the chromosome. It carries out the reaction a 2'-deoxyribonucleoside 5'-triphosphate + H2O = a 2'-deoxyribonucleoside + triphosphate + H(+). The catalysed reaction is dATP + H2O = 2'-deoxyadenosine + triphosphate + H(+). It catalyses the reaction dCTP + H2O = 2'-deoxycytidine + triphosphate + H(+). The enzyme catalyses dGTP + H2O = 2'-deoxyguanosine + triphosphate + H(+). It carries out the reaction dTTP + H2O = thymidine + triphosphate + H(+). With respect to regulation, allosterically activated and regulated via the combined actions of GTP and dNTPs (dATP, dGTP, dTTP and dCTP): Allosteric site 1 binds GTP, while allosteric site 2 binds dNTP. Allosteric activation promotes the formation of highly active homotetramers. Its function is as follows. Protein that acts both as a host restriction factor involved in defense response to virus and as a regulator of DNA end resection at stalled replication forks. Has deoxynucleoside triphosphate (dNTPase) activity, which is required to restrict infection by viruses: dNTPase activity reduces cellular dNTP levels to levels too low for retroviral reverse transcription to occur, blocking early-stage virus replication in dendritic and other myeloid cells. Likewise, suppresses LINE-1 retrotransposon activity. In addition to virus restriction, dNTPase activity acts as a regulator of DNA precursor pools by regulating dNTP pools. Functions during S phase at stalled DNA replication forks to promote the resection of gapped or reversed forks: acts by stimulating the exonuclease activity of MRE11, activating the ATR-CHK1 pathway and allowing the forks to restart replication. Its ability to promote degradation of nascent DNA at stalled replication forks is required to prevent induction of type I interferons, thereby preventing chronic inflammation. Ability to promote DNA end resection at stalled replication forks is independent of dNTPase activity. Enhances immunoglobulin hypermutation in B-lymphocytes by promoting transversion mutation. The sequence is that of Deoxynucleoside triphosphate triphosphohydrolase SAMHD1 from Bos taurus (Bovine).